The following is a 132-amino-acid chain: Small ribosomal subunit protein uS8c (132 aa).

This sequence belongs to the universal ribosomal protein uS8 family. Part of the 30S ribosomal subunit.

The protein resides in the plastid. Its subcellular location is the chloroplast. Its function is as follows. One of the primary rRNA binding proteins, it binds directly to 16S rRNA central domain where it helps coordinate assembly of the platform of the 30S subunit. The chain is Small ribosomal subunit protein uS8c (rps8) from Amborella trichopoda.